We begin with the raw amino-acid sequence, 950 residues long: RNA polymerase-associated protein RapA (950 aa).

One can recognise a Helicase ATP-binding domain in the interval 165–333 (EVADRMAPRV…FARLRLLDPN (169 aa)). Residue 178-185 (DEVGLGKT) participates in ATP binding. Positions 279–282 (DEAH) match the DEAH box motif. The Helicase C-terminal domain occupies 475 to 629 (RVEWLIDTLK…TCPTGNALQH (155 aa)).

The protein belongs to the SNF2/RAD54 helicase family. RapA subfamily. In terms of assembly, interacts with the RNAP. Has a higher affinity for the core RNAP than for the holoenzyme. Its ATPase activity is stimulated by binding to RNAP.

Its function is as follows. Transcription regulator that activates transcription by stimulating RNA polymerase (RNAP) recycling in case of stress conditions such as supercoiled DNA or high salt concentrations. Probably acts by releasing the RNAP, when it is trapped or immobilized on tightly supercoiled DNA. Does not activate transcription on linear DNA. Probably not involved in DNA repair. This Pseudomonas aeruginosa (strain LESB58) protein is RNA polymerase-associated protein RapA.